Consider the following 612-residue polypeptide: Probable Xaa-Pro aminopeptidase P (612 aa).

Mn(2+) contacts are provided by D409, D420, E518, and E532.

It belongs to the peptidase M24B family. Mn(2+) serves as cofactor.

The catalysed reaction is Release of any N-terminal amino acid, including proline, that is linked to proline, even from a dipeptide or tripeptide.. In terms of biological role, catalyzes the removal of a penultimate prolyl residue from the N-termini of peptides. The protein is Probable Xaa-Pro aminopeptidase P (AMPP) of Verticillium alfalfae (strain VaMs.102 / ATCC MYA-4576 / FGSC 10136) (Verticillium wilt of alfalfa).